The following is a 184-amino-acid chain: tRNA (cytidine(56)-2'-O)-methyltransferase (184 aa).

Residues L87, 112 to 116, and 130 to 137 contribute to the S-adenosyl-L-methionine site; these read GAEKV and VANQPHSE.

It belongs to the aTrm56 family. As to quaternary structure, homodimer.

It localises to the cytoplasm. The catalysed reaction is cytidine(56) in tRNA + S-adenosyl-L-methionine = 2'-O-methylcytidine(56) in tRNA + S-adenosyl-L-homocysteine + H(+). In terms of biological role, specifically catalyzes the AdoMet-dependent 2'-O-ribose methylation of cytidine at position 56 in tRNAs. In Methanocorpusculum labreanum (strain ATCC 43576 / DSM 4855 / Z), this protein is tRNA (cytidine(56)-2'-O)-methyltransferase.